A 287-amino-acid chain; its full sequence is Fructose-bisphosphate aldolase (287 aa).

Ser-50 contributes to the D-glyceraldehyde 3-phosphate binding site. Asp-85 functions as the Proton donor in the catalytic mechanism. Residues His-86, Asp-107, Glu-137, and His-181 each coordinate Zn(2+). Gly-182 contributes to the dihydroxyacetone phosphate binding site. His-209 is a Zn(2+) binding site. Residues 210-212 (GGT) and 231-234 (NVNT) contribute to the dihydroxyacetone phosphate site. A phosphothreonine mark is found at Thr-212 and Thr-234.

The protein belongs to the class II fructose-bisphosphate aldolase family. The cofactor is Zn(2+).

It catalyses the reaction beta-D-fructose 1,6-bisphosphate = D-glyceraldehyde 3-phosphate + dihydroxyacetone phosphate. It participates in carbohydrate degradation; glycolysis; D-glyceraldehyde 3-phosphate and glycerone phosphate from D-glucose: step 4/4. Its function is as follows. Catalyzes the aldol condensation of dihydroxyacetone phosphate (DHAP or glycerone-phosphate) with glyceraldehyde 3-phosphate (G3P) to form fructose 1,6-bisphosphate (FBP) in gluconeogenesis and the reverse reaction in glycolysis. This Geobacillus stearothermophilus (Bacillus stearothermophilus) protein is Fructose-bisphosphate aldolase (fba).